A 146-amino-acid chain; its full sequence is Snaclec CTL-Eoc124 (146 aa).

The N-terminal stretch at 1–23 (MGRFISVSFGLLVVFLSLSGTGA) is a signal peptide. Intrachain disulfides connect Cys-25–Cys-36, Cys-53–Cys-142, and Cys-119–Cys-134. Residues 32-143 (YQGHCYRVFN…CSRTNNVACK (112 aa)) form the C-type lectin domain.

It belongs to the snaclec family. Heterodimer; disulfide-linked. Expressed by the venom gland.

The protein resides in the secreted. Functionally, interferes with one step of hemostasis (modulation of platelet aggregation, or coagulation cascade, for example). This is Snaclec CTL-Eoc124 from Echis ocellatus (Ocellated saw-scaled viper).